Reading from the N-terminus, the 513-residue chain is ATP synthase subunit alpha (513 aa).

Residue 169–176 (GDRQTGKT) coordinates ATP.

Belongs to the ATPase alpha/beta chains family. F-type ATPases have 2 components, CF(1) - the catalytic core - and CF(0) - the membrane proton channel. CF(1) has five subunits: alpha(3), beta(3), gamma(1), delta(1), epsilon(1). CF(0) has three main subunits: a(1), b(2) and c(9-12). The alpha and beta chains form an alternating ring which encloses part of the gamma chain. CF(1) is attached to CF(0) by a central stalk formed by the gamma and epsilon chains, while a peripheral stalk is formed by the delta and b chains.

It is found in the cell inner membrane. It carries out the reaction ATP + H2O + 4 H(+)(in) = ADP + phosphate + 5 H(+)(out). Produces ATP from ADP in the presence of a proton gradient across the membrane. The alpha chain is a regulatory subunit. In Bordetella bronchiseptica (strain ATCC BAA-588 / NCTC 13252 / RB50) (Alcaligenes bronchisepticus), this protein is ATP synthase subunit alpha.